The following is a 363-amino-acid chain: Homeobox protein Hox-A2 (363 aa).

Disordered stretches follow at residues 23 to 133 (TSFP…SRRL) and 183 to 216 (MKHK…DEEK). Polar residues-rich tracts occupy residues 31–46 (TFQS…SHST) and 55–78 (TIPS…NGTS). Positions 88–93 (EYPWMK) match the Antp-type hexapeptide motif. The segment at residues 130 to 189 (SRRLRTAYTNTQLLELEKEFHFNKYLCRPRRVEIAALLDLTERQVKVWFQNRRMKHKRQT) is a DNA-binding region (homeobox).

It belongs to the Antp homeobox family. Proboscipedia subfamily.

The protein resides in the nucleus. In terms of biological role, sequence-specific transcription factor which is part of a developmental regulatory system that provides cells with specific positional identities on the anterior-posterior axis. The polypeptide is Homeobox protein Hox-A2 (HOXA2) (Heterodontus francisci (Horn shark)).